Consider the following 199-residue polypeptide: dTTP/UTP pyrophosphatase (199 aa).

The active-site Proton acceptor is D78.

Belongs to the Maf family. YhdE subfamily. It depends on a divalent metal cation as a cofactor.

It localises to the cytoplasm. It carries out the reaction dTTP + H2O = dTMP + diphosphate + H(+). The enzyme catalyses UTP + H2O = UMP + diphosphate + H(+). Nucleoside triphosphate pyrophosphatase that hydrolyzes dTTP and UTP. May have a dual role in cell division arrest and in preventing the incorporation of modified nucleotides into cellular nucleic acids. This chain is dTTP/UTP pyrophosphatase, found in Clostridium acetobutylicum (strain ATCC 824 / DSM 792 / JCM 1419 / IAM 19013 / LMG 5710 / NBRC 13948 / NRRL B-527 / VKM B-1787 / 2291 / W).